The primary structure comprises 274 residues: MTLQEEIIRQLGVKASIDPKEEIRKTVDFLKTYLRKHSFLKTYVLGISGGQDSTLAGKLAQMAIAELREETGDQAYQFIAVRLPYGVQADEADAQKALAFIMPDQTLTINIKAAVDGQVAALQEAGIEISDFNKGNIKARQRMISQYAIAGQMAGAVIGTDHAAENITGFFTKFGDGGADILPLFRLNKRQGKALLKVLGADAALYEKVPTADLEDQKPGLADEVALGVTYQDIDDYLEGKLISKVAQATIEKWWHKGQHKRHLPITIFDDFWK.

Gly46–Ser53 is a binding site for ATP. Asp52 contributes to the Mg(2+) binding site. Arg140 lines the deamido-NAD(+) pocket. Position 160 (Thr160) interacts with ATP. Glu165 provides a ligand contact to Mg(2+). Deamido-NAD(+)-binding residues include Lys173 and Asp180. ATP-binding residues include Lys189 and Thr211. His260–Lys261 lines the deamido-NAD(+) pocket.

The protein belongs to the NAD synthetase family. In terms of assembly, homodimer.

The enzyme catalyses deamido-NAD(+) + NH4(+) + ATP = AMP + diphosphate + NAD(+) + H(+). It functions in the pathway cofactor biosynthesis; NAD(+) biosynthesis; NAD(+) from deamido-NAD(+) (ammonia route): step 1/1. Functionally, catalyzes the ATP-dependent amidation of deamido-NAD to form NAD. Uses ammonia as a nitrogen source. The sequence is that of NH(3)-dependent NAD(+) synthetase from Streptococcus pyogenes serotype M18 (strain MGAS8232).